The chain runs to 275 residues: Digeranylgeranylglyceryl phosphate synthase (275 aa).

Transmembrane regions (helical) follow at residues 12 to 32 (VHNVVGSAVSAFMGYVIATTW), 35 to 55 (TPLFFLPLLVVSLIAAGGYVI), 88 to 108 (IVLFAVGLIISIPLGLIPFGF), 125 to 145 (KLGLVGNFIVALTSALSAYYG), 146 to 166 (GLASGSLLGNFIIPTIYIFFF), 200 to 220 (WIIAKIILGILIFTSPLPYFL), 224 to 244 (VIYLIGILALDVLLVYILILH), and 255 to 275 (SLMKIYAIGTLIVFTLGSLRI).

Belongs to the UbiA prenyltransferase family. DGGGP synthase subfamily. Mg(2+) serves as cofactor.

It localises to the cell membrane. The enzyme catalyses sn-3-O-(geranylgeranyl)glycerol 1-phosphate + (2E,6E,10E)-geranylgeranyl diphosphate = 2,3-bis-O-(geranylgeranyl)-sn-glycerol 1-phosphate + diphosphate. It functions in the pathway membrane lipid metabolism; glycerophospholipid metabolism. Its function is as follows. Prenyltransferase that catalyzes the transfer of the geranylgeranyl moiety of geranylgeranyl diphosphate (GGPP) to the C2 hydroxyl of (S)-3-O-geranylgeranylglyceryl phosphate (GGGP). This reaction is the second ether-bond-formation step in the biosynthesis of archaeal membrane lipids. The sequence is that of Digeranylgeranylglyceryl phosphate synthase from Sulfolobus acidocaldarius (strain ATCC 33909 / DSM 639 / JCM 8929 / NBRC 15157 / NCIMB 11770).